The chain runs to 841 residues: DNA ligase (841 aa).

Residues 54-58 (DAEYD), 103-104 (SL), and Glu-143 contribute to the NAD(+) site. Lys-145 acts as the N6-AMP-lysine intermediate in catalysis. The NAD(+) site is built by Arg-166, Glu-203, Lys-321, and Lys-345. Zn(2+) is bound by residues Cys-471, Cys-474, Cys-489, and Cys-495. The segment at 554 to 575 (KTVAESDQMPSEGSSVGASGKH) is disordered. The span at 561-570 (QMPSEGSSVG) shows a compositional bias: polar residues. The BRCT domain maps to 764 to 841 (GINKAVAGKT…SEAELLTLLG (78 aa)).

Belongs to the NAD-dependent DNA ligase family. LigA subfamily. Mg(2+) is required as a cofactor. Requires Mn(2+) as cofactor.

It catalyses the reaction NAD(+) + (deoxyribonucleotide)n-3'-hydroxyl + 5'-phospho-(deoxyribonucleotide)m = (deoxyribonucleotide)n+m + AMP + beta-nicotinamide D-nucleotide.. Functionally, DNA ligase that catalyzes the formation of phosphodiester linkages between 5'-phosphoryl and 3'-hydroxyl groups in double-stranded DNA using NAD as a coenzyme and as the energy source for the reaction. It is essential for DNA replication and repair of damaged DNA. The polypeptide is DNA ligase (Neisseria meningitidis serogroup C / serotype 2a (strain ATCC 700532 / DSM 15464 / FAM18)).